Reading from the N-terminus, the 59-residue chain is UPF0434 protein Ping_0902 (59 aa).

It belongs to the UPF0434 family.

This is UPF0434 protein Ping_0902 from Psychromonas ingrahamii (strain DSM 17664 / CCUG 51855 / 37).